The following is a 170-amino-acid chain: MSGAGRPEYTVDAQGLTLGVVATRWNAEVVEPMLERALAAAEQCKVAETTVVRVAGAVEIPVVAQELARTHDAVVALGAVIRGDTPHFDYVCQSFTHGLTEVALRTEVPVGNGVLTCDTLEQARDRAGLPDSKEDKGWEAAVAALDTALVLRKLRDARGQRDGRPRPTTT.

Residues W25, 57 to 59 (AVE), and 79 to 81 (AVI) contribute to the 5-amino-6-(D-ribitylamino)uracil site. 84 to 85 (DT) provides a ligand contact to (2S)-2-hydroxy-3-oxobutyl phosphate. Residue H87 is the Proton donor of the active site. 5-amino-6-(D-ribitylamino)uracil is bound at residue N112. R126 serves as a coordination point for (2S)-2-hydroxy-3-oxobutyl phosphate.

Belongs to the DMRL synthase family.

It carries out the reaction (2S)-2-hydroxy-3-oxobutyl phosphate + 5-amino-6-(D-ribitylamino)uracil = 6,7-dimethyl-8-(1-D-ribityl)lumazine + phosphate + 2 H2O + H(+). Its pathway is cofactor biosynthesis; riboflavin biosynthesis; riboflavin from 2-hydroxy-3-oxobutyl phosphate and 5-amino-6-(D-ribitylamino)uracil: step 1/2. Catalyzes the formation of 6,7-dimethyl-8-ribityllumazine by condensation of 5-amino-6-(D-ribitylamino)uracil with 3,4-dihydroxy-2-butanone 4-phosphate. This is the penultimate step in the biosynthesis of riboflavin. This Thermobifida fusca (strain YX) protein is 6,7-dimethyl-8-ribityllumazine synthase.